The chain runs to 274 residues: MITGYSTPSAHVLMSSRAFKSSSYRAAAGQTQHYLARSSLPVVKNSWGSPPSPFNELPRVSRGVPLSYLSASSSLLLNGEQGSLSGTLPVLPVRRKTLLTPRASKDVPSSFRFPPMTKKPQWWWRTLACLPYLMPLHETWMYAETAYHLHPFLEDFEFLTYPFLGAIGRLPSWFLMAYFFVAYLGIVRRKEWPHFFRFHVVMGMLLEIALQVIGTVSKWMPLGVYWGKFGMHFWTAVAFAYLFTVLESIRCALAGMYADIPFVCDAAYIQIPYD.

Residues 1-65 constitute a chloroplast transit peptide; the sequence is MITGYSTPSA…ELPRVSRGVP (65 aa). Helical transmembrane passes span 130–152, 167–187, 200–220, and 229–249; these read LPYL…LHPF, IGRL…LGIV, VVMG…SKWM, and FGMH…LESI.

It belongs to the Tic20 family. Part of the Tic complex. Component of the 1-MD complex, composed of TIC20-I, TIC214, TIC100 and TIC56. Interacts with the translocating preproteins. Hydrolysis of ATP is essential for the formation of this complex. The 1-MD complex interacts with TIC21. In terms of tissue distribution, expressed in leaves, shoots and roots. High expression in mature photosynthetic tissues. Lower levels in non-photosynthetic tissues and roots.

It is found in the plastid. The protein resides in the chloroplast inner membrane. In terms of biological role, involved in protein precursor import into chloroplasts. May be part of an intermediate translocation complex acting as a protein-conducting channel at the inner envelope. Seems to be specific for photosynthesis-related pre-proteins. Partially redundant with TIC20-IV, but not with TIC20-II or TIC20-V. The sequence is that of Protein TIC 20-I, chloroplastic from Arabidopsis thaliana (Mouse-ear cress).